A 733-amino-acid chain; its full sequence is Putative cyclic nucleotide-gated ion channel 9 (733 aa).

Over 1 to 117 the chain is Cytoplasmic; that stretch reads MLDCGKKAVK…DKFLLLCNKL (117 aa). Residues 118 to 138 form a helical membrane-spanning segment; sequence FVTSCILAVSVDPLFLYLPFV. Residues 139–151 lie on the Extracellular side of the membrane; it reads KDNEKCIGIDRKL. Residues 152–172 traverse the membrane as a helical segment; it reads AIIATTLRTVIDAFYLFHMAL. At 173-207 the chain is on the cytoplasmic side; the sequence is RFRTAFVAPSSRVFGRGELVIDPAQIAKRYLQQYF. The chain crosses the membrane as a helical span at residues 208–228; it reads IIDFLSVLPLPQIVVWRFLYI. The Extracellular segment spans residues 229–239; that stretch reads SKGASVLATKR. The chain crosses the membrane as a helical span at residues 240–260; that stretch reads ALRSIILVQYIPRFIRLYPLS. Residues 261–280 lie on the Cytoplasmic side of the membrane; sequence SELKRTAGVFAETAWAGAAY. A helical membrane pass occupies residues 281-301; it reads YLLLYMLASHIVGAIWYLLAL. Residues 302–406 lie on the Extracellular side of the membrane; sequence ERYNGCWTKV…GQGLETSTYP (105 aa). The chain crosses the membrane as a helical span at residues 407-427; that stretch reads GEVIFSIALAIAGLLLFALLI. The Cytoplasmic portion of the chain corresponds to 428 to 733; the sequence is GNMQTYLQSL…EPDFSADDTS (306 aa). Residues 513 to 637 and Glu-584 contribute to the a nucleoside 3',5'-cyclic phosphate site; that span reads LFEN…SRQV. A calmodulin-binding region spans residues 629-644; sequence FRRLHSRQVQHTFRFY. Residues 649–678 enclose the IQ domain; that stretch reads RTWAAIFIQAAWRRYVKKKKLEQLRKEEEE.

It belongs to the cyclic nucleotide-gated cation channel (TC 1.A.1.5) family. Homotetramer or heterotetramer.

It is found in the cell membrane. Functionally, putative cyclic nucleotide-gated ion channel. This chain is Putative cyclic nucleotide-gated ion channel 9 (CNGC9), found in Arabidopsis thaliana (Mouse-ear cress).